We begin with the raw amino-acid sequence, 1306 residues long: Disease resistance protein Roq1 (1306 aa).

The TIR domain occupies 10–179 (RSYDVFLSFR…QILKDIFDKF (170 aa)). NAD(+) is bound by residues 19-24 (RGEDTR) and G52. The active site involves E86. The NB-ARC domain maps to 198–417 (KKLSSLLRMD…IDRLKDNPEG (220 aa)). LRR repeat units follow at residues 200 to 224 (LSSL…GVGK), 252 to 275 (LQHH…EFVD), 417 to 440 (GEIM…IFLD), 599 to 622 (PSKL…AKRL), 645 to 669 (ITNL…VGFL), 670 to 693 (KNLI…IQSE), 716 to 739 (MTHL…IEHL), 741 to 763 (SLEN…IWRF), 784 to 807 (SNCT…IGNL), 808 to 831 (TSLN…IWGL), 832 to 857 (TSLT…AINH), 878 to 902 (LDLL…IWML), 904 to 926 (FLRI…LGHL), 927 to 949 (EHLE…VARL), 961 to 983 (FAIG…VFGS), 987 to 1010 (LGSV…MNQL), 1013 to 1036 (LEYL…SIKE), and 1045 to 1070 (LRIM…EYQN).

This sequence belongs to the disease resistance TIR-NB-LRR family. Homodimer.

It catalyses the reaction NAD(+) + H2O = ADP-D-ribose + nicotinamide + H(+). It carries out the reaction NAD(+) = 2'cADPR + nicotinamide + H(+). Its function is as follows. Disease resistance (R) protein that specifically recognizes the Xanthomonas and Pseudomonas effector proteins XopQ and HopQ1, and triggers cell death. An NAD(+) hydrolase (NADase): in response to activation, catalyzes cleavage of NAD(+) into ADP-D-ribose (ADPR) and nicotinamide; NAD(+) cleavage triggers a defense system that promotes cell death. Makes small amounts of 2' cyclic ADPR (2'cADPR). The protein is Disease resistance protein Roq1 of Nicotiana benthamiana.